Reading from the N-terminus, the 266-residue chain is ATP synthase subunit a (266 aa).

The next 6 membrane-spanning stretches (helical) occupy residues 38 to 58, 99 to 119, 126 to 146, 162 to 182, 191 to 211, and 224 to 244; these read KQMLLVILSVVIIATFFLLAA, LLFSLFFFILVNNIYGAIPLI, HVGGAYVLAAIVYLTWIAIGV, GVPVYILPIVIPIEIISNFLV, LFATMLAGHLIVMIAGSGIEY, and SVLVLVGAIAMYMLEALIMAL.

The protein belongs to the ATPase A chain family. In terms of assembly, F-type ATPases have 2 components, CF(1) - the catalytic core - and CF(0) - the membrane proton channel. CF(1) has five subunits: alpha(3), beta(3), gamma(1), delta(1), epsilon(1). CF(0) has three main subunits: a(1), b(2) and c(9-12). The alpha and beta chains form an alternating ring which encloses part of the gamma chain. CF(1) is attached to CF(0) by a central stalk formed by the gamma and epsilon chains, while a peripheral stalk is formed by the delta and b chains.

The protein resides in the cell membrane. In terms of biological role, key component of the proton channel; it plays a direct role in the translocation of protons across the membrane. In Arthrobacter sp. (strain FB24), this protein is ATP synthase subunit a.